Consider the following 177-residue polypeptide: Protein GrpE (177 aa).

Belongs to the GrpE family. In terms of assembly, homodimer. K(+) serves as cofactor.

It is found in the cytoplasm. Participates actively in the response to hyperosmotic and heat shock by preventing the aggregation of stress-denatured proteins, in association with DnaK and GrpE. It is the nucleotide exchange factor for DnaK and may function as a thermosensor. Unfolded proteins bind initially to DnaJ; upon interaction with the DnaJ-bound protein, DnaK hydrolyzes its bound ATP, resulting in the formation of a stable complex. GrpE releases ADP from DnaK; ATP binding to DnaK triggers the release of the substrate protein, thus completing the reaction cycle. Several rounds of ATP-dependent interactions between DnaJ, DnaK and GrpE are required for fully efficient folding. The protein is Protein GrpE of Thermus thermophilus (strain ATCC 27634 / DSM 579 / HB8).